The sequence spans 498 residues: ATP synthase subunit beta, chloroplastic (498 aa).

172 to 179 serves as a coordination point for ATP; it reads GGAGVGKT.

It belongs to the ATPase alpha/beta chains family. As to quaternary structure, F-type ATPases have 2 components, CF(1) - the catalytic core - and CF(0) - the membrane proton channel. CF(1) has five subunits: alpha(3), beta(3), gamma(1), delta(1), epsilon(1). CF(0) has four main subunits: a(1), b(1), b'(1) and c(9-12).

The protein resides in the plastid. It localises to the chloroplast thylakoid membrane. It carries out the reaction ATP + H2O + 4 H(+)(in) = ADP + phosphate + 5 H(+)(out). Functionally, produces ATP from ADP in the presence of a proton gradient across the membrane. The catalytic sites are hosted primarily by the beta subunits. This Myristica fragrans (Nutmeg) protein is ATP synthase subunit beta, chloroplastic.